The chain runs to 802 residues: Peptidyl serine alpha-galactosyltransferase (802 aa).

The signal sequence occupies residues 1–19 (MRWDLITAIVAALVVSVLA). At 20-750 (DESGQMAPYR…SEGRFSTLKL (731 aa)) the chain is on the extracellular side. N214, N275, N425, and N637 each carry an N-linked (GlcNAc...) asparagine glycan. The segment at 699–741 (RNCPEPGSESTEKISVSRKVGNIETKQTQGSDETKESSGSSES) is disordered. The chain crosses the membrane as a helical span at residues 751-771 (WVIALWLISGVGFLVVMLLVF). Topologically, residues 772 to 802 (STRRGRGTTRGKGYRNKRRTSYSNTGFLDTK) are cytoplasmic. Residues 777 to 791 (RGTTRGKGYRNKRRT) are compositionally biased toward basic residues. The disordered stretch occupies residues 777-802 (RGTTRGKGYRNKRRTSYSNTGFLDTK). The span at 792–802 (SYSNTGFLDTK) shows a compositional bias: polar residues.

It localises to the endoplasmic reticulum membrane. Glycosyltransferase involved in the O-galactosylation of several proteins including extensins. Catalyzes the transfer of alpha-galactosyl to Ser residues. Hydroxylation of proline residues adjacent to the serine acceptor is required for activity. The protein is Peptidyl serine alpha-galactosyltransferase of Arabidopsis thaliana (Mouse-ear cress).